Here is a 363-residue protein sequence, read N- to C-terminus: UDP-N-acetylglucosamine--N-acetylmuramyl-(pentapeptide) pyrophosphoryl-undecaprenol N-acetylglucosamine transferase (363 aa).

UDP-N-acetyl-alpha-D-glucosamine is bound by residues 10 to 12, Asn-124, Ser-195, Ile-250, and Gln-295; that span reads TGG.

It belongs to the glycosyltransferase 28 family. MurG subfamily.

It localises to the cell membrane. It catalyses the reaction di-trans,octa-cis-undecaprenyl diphospho-N-acetyl-alpha-D-muramoyl-L-alanyl-D-glutamyl-meso-2,6-diaminopimeloyl-D-alanyl-D-alanine + UDP-N-acetyl-alpha-D-glucosamine = di-trans,octa-cis-undecaprenyl diphospho-[N-acetyl-alpha-D-glucosaminyl-(1-&gt;4)]-N-acetyl-alpha-D-muramoyl-L-alanyl-D-glutamyl-meso-2,6-diaminopimeloyl-D-alanyl-D-alanine + UDP + H(+). The protein operates within cell wall biogenesis; peptidoglycan biosynthesis. Functionally, cell wall formation. Catalyzes the transfer of a GlcNAc subunit on undecaprenyl-pyrophosphoryl-MurNAc-pentapeptide (lipid intermediate I) to form undecaprenyl-pyrophosphoryl-MurNAc-(pentapeptide)GlcNAc (lipid intermediate II). The polypeptide is UDP-N-acetylglucosamine--N-acetylmuramyl-(pentapeptide) pyrophosphoryl-undecaprenol N-acetylglucosamine transferase (Halalkalibacterium halodurans (strain ATCC BAA-125 / DSM 18197 / FERM 7344 / JCM 9153 / C-125) (Bacillus halodurans)).